The following is a 78-amino-acid chain: UPF0349 protein BH3414 (78 aa).

This sequence belongs to the UPF0349 family.

In Halalkalibacterium halodurans (strain ATCC BAA-125 / DSM 18197 / FERM 7344 / JCM 9153 / C-125) (Bacillus halodurans), this protein is UPF0349 protein BH3414.